A 303-amino-acid chain; its full sequence is tRNA pseudouridine synthase B (303 aa).

Catalysis depends on D38, which acts as the Nucleophile.

Belongs to the pseudouridine synthase TruB family. Type 1 subfamily.

The catalysed reaction is uridine(55) in tRNA = pseudouridine(55) in tRNA. Responsible for synthesis of pseudouridine from uracil-55 in the psi GC loop of transfer RNAs. The chain is tRNA pseudouridine synthase B from Levilactobacillus brevis (strain ATCC 367 / BCRC 12310 / CIP 105137 / JCM 1170 / LMG 11437 / NCIMB 947 / NCTC 947) (Lactobacillus brevis).